The following is a 233-amino-acid chain: Archaetidylserine synthase (233 aa).

The next 8 helical transmembrane spans lie at 7 to 27 (ITSF…SGYL), 29 to 49 (ILLS…LAVL), 75 to 95 (SLSD…SAAV), 102 to 122 (ILVG…FNVL), 126 to 146 (GKNF…SFYL), 147 to 167 (TGFY…VLMI), 180 to 200 (ASTA…VEIL), and 206 to 226 (VAGP…AVPI).

It belongs to the CDP-alcohol phosphatidyltransferase class-I family.

The protein resides in the membrane. The enzyme catalyses CDP-2,3-bis-O-(geranylgeranyl)-sn-glycerol + L-serine = archaetidylserine + CMP + H(+). The catalysed reaction is CDP-2,3-bis-O-(phytanyl)-sn-glycerol + L-serine = 2,3-bis-O-phytanyl-sn-glycero-3-phospho-L-serine + CMP + H(+). The protein operates within membrane lipid metabolism; glycerophospholipid metabolism. With respect to regulation, activated by Mn(2+) ions. Functionally, involved in the lipid biosynthesis. Catalyzes the formation of unsaturated archaetidylserine from CDP-unsaturated archaeol and L-serine. Activity with ester-linked substrate analogs containing straight aliphatic chains (typical bacterial substrates) is two to three times higher than that with the corresponding ether-type substrate (typical archaeal substrates). Both enantiomers of CDP-unsaturated archaeols with ether-linked geranylgeranyl chains and CDP-saturated archaeol with ether-linked phytanyl chains are similarly active. The enzyme also accepts D-serine, although activity is only about third of that with L-serine. The chain is Archaetidylserine synthase from Methanothermobacter thermautotrophicus (strain ATCC 29096 / DSM 1053 / JCM 10044 / NBRC 100330 / Delta H) (Methanobacterium thermoautotrophicum).